We begin with the raw amino-acid sequence, 1399 residues long: DNA-directed RNA polymerase subunit beta' (1399 aa).

Residues Cys71, Cys73, Cys86, and Cys89 each coordinate Zn(2+). 3 residues coordinate Mg(2+): Asp462, Asp464, and Asp466. Residues Cys810, Cys884, Cys891, and Cys894 each coordinate Zn(2+). The disordered stretch occupies residues 1379–1399 (KQAAIVPSQPEPQPLALPPAE). Residues 1387-1399 (QPEPQPLALPPAE) are compositionally biased toward pro residues.

This sequence belongs to the RNA polymerase beta' chain family. In terms of assembly, the RNAP catalytic core consists of 2 alpha, 1 beta, 1 beta' and 1 omega subunit. When a sigma factor is associated with the core the holoenzyme is formed, which can initiate transcription. Mg(2+) is required as a cofactor. It depends on Zn(2+) as a cofactor.

It catalyses the reaction RNA(n) + a ribonucleoside 5'-triphosphate = RNA(n+1) + diphosphate. DNA-dependent RNA polymerase catalyzes the transcription of DNA into RNA using the four ribonucleoside triphosphates as substrates. The polypeptide is DNA-directed RNA polymerase subunit beta' (Bradyrhizobium sp. (strain ORS 278)).